The following is a 192-amino-acid chain: uncharacterized protein (192 aa).

To M.thermoautotrophicum MTH863.

This is an uncharacterized protein from Methanocaldococcus jannaschii (strain ATCC 43067 / DSM 2661 / JAL-1 / JCM 10045 / NBRC 100440) (Methanococcus jannaschii).